The following is a 279-amino-acid chain: NADPH-dependent 7-cyano-7-deazaguanine reductase (279 aa).

Residue 86–88 participates in substrate binding; sequence VES. An NADPH-binding site is contributed by 88–89; sequence SK. Cys187 (thioimide intermediate) is an active-site residue. The active-site Proton donor is the Asp194. Substrate is bound at residue 226–227; that stretch reads HE. 255–256 is an NADPH binding site; the sequence is RG.

It belongs to the GTP cyclohydrolase I family. QueF type 2 subfamily. As to quaternary structure, homodimer.

The protein localises to the cytoplasm. The enzyme catalyses 7-aminomethyl-7-carbaguanine + 2 NADP(+) = 7-cyano-7-deazaguanine + 2 NADPH + 3 H(+). The protein operates within tRNA modification; tRNA-queuosine biosynthesis. Functionally, catalyzes the NADPH-dependent reduction of 7-cyano-7-deazaguanine (preQ0) to 7-aminomethyl-7-deazaguanine (preQ1). The protein is NADPH-dependent 7-cyano-7-deazaguanine reductase of Actinobacillus succinogenes (strain ATCC 55618 / DSM 22257 / CCUG 43843 / 130Z).